The following is a 217-amino-acid chain: Protein GrpE (217 aa).

Belongs to the GrpE family. As to quaternary structure, homodimer.

The protein resides in the cytoplasm. In terms of biological role, participates actively in the response to hyperosmotic and heat shock by preventing the aggregation of stress-denatured proteins, in association with DnaK and GrpE. It is the nucleotide exchange factor for DnaK and may function as a thermosensor. Unfolded proteins bind initially to DnaJ; upon interaction with the DnaJ-bound protein, DnaK hydrolyzes its bound ATP, resulting in the formation of a stable complex. GrpE releases ADP from DnaK; ATP binding to DnaK triggers the release of the substrate protein, thus completing the reaction cycle. Several rounds of ATP-dependent interactions between DnaJ, DnaK and GrpE are required for fully efficient folding. The chain is Protein GrpE from Mycoplasma genitalium (strain ATCC 33530 / DSM 19775 / NCTC 10195 / G37) (Mycoplasmoides genitalium).